The sequence spans 209 residues: Ubiquitin-conjugating enzyme E2 S (209 aa).

The region spanning 14–160 (QTIRQVMREL…ARMMTEIHAQ (147 aa)) is the UBC core domain. Catalysis depends on Cys98, which acts as the Glycyl thioester intermediate. A disordered region spans residues 162-209 (AKCGAGAHGDDKDDDGPSTKKHAGLDKKLQDKKKEKLLKEKKRMLKRL). The span at 169–199 (HGDDKDDDGPSTKKHAGLDKKLQDKKKEKLL) shows a compositional bias: basic and acidic residues. Over residues 200–209 (KEKKRMLKRL) the composition is skewed to basic residues.

The protein belongs to the ubiquitin-conjugating enzyme family.

The catalysed reaction is S-ubiquitinyl-[E1 ubiquitin-activating enzyme]-L-cysteine + [E2 ubiquitin-conjugating enzyme]-L-cysteine = [E1 ubiquitin-activating enzyme]-L-cysteine + S-ubiquitinyl-[E2 ubiquitin-conjugating enzyme]-L-cysteine.. Its pathway is protein modification; protein ubiquitination. Functionally, catalyzes the covalent attachment of ubiquitin to other proteins. Acts as an essential factor of the anaphase promoting complex/cyclosome (APC/C), a cell cycle-regulated ubiquitin ligase that controls progression through mitosis. Acts by specifically elongating polyubiquitin chains initiated by the E2 enzyme vih/UbcH10 on APC/C substrates, enhancing the degradation of APC/C substrates by the proteasome and promoting mitotic exit. This Drosophila erecta (Fruit fly) protein is Ubiquitin-conjugating enzyme E2 S.